The primary structure comprises 732 residues: Polyribonucleotide nucleotidyltransferase (732 aa).

Asp502 and Asp508 together coordinate Mg(2+). The KH domain maps to 569-628; that stretch reads PRLTSIQIPVDAIGMVIGKGGETIRSITEETGAEINIDDDGTVTIACSSPEGTKAAVETI. Residues 638 to 712 enclose the S1 motif domain; the sequence is GTIYMGKVRD…GKTKFALSIK (75 aa).

This sequence belongs to the polyribonucleotide nucleotidyltransferase family. The cofactor is Mg(2+).

The protein resides in the cytoplasm. It catalyses the reaction RNA(n+1) + phosphate = RNA(n) + a ribonucleoside 5'-diphosphate. Its function is as follows. Involved in mRNA degradation. Catalyzes the phosphorolysis of single-stranded polyribonucleotides processively in the 3'- to 5'-direction. The chain is Polyribonucleotide nucleotidyltransferase from Chlorobaculum parvum (strain DSM 263 / NCIMB 8327) (Chlorobium vibrioforme subsp. thiosulfatophilum).